A 284-amino-acid polypeptide reads, in one-letter code: Bifunctional protein FolD (284 aa).

NADP(+) is bound at residue 166 to 168 (GAS).

The protein belongs to the tetrahydrofolate dehydrogenase/cyclohydrolase family. As to quaternary structure, homodimer.

The enzyme catalyses (6R)-5,10-methylene-5,6,7,8-tetrahydrofolate + NADP(+) = (6R)-5,10-methenyltetrahydrofolate + NADPH. It catalyses the reaction (6R)-5,10-methenyltetrahydrofolate + H2O = (6R)-10-formyltetrahydrofolate + H(+). It functions in the pathway one-carbon metabolism; tetrahydrofolate interconversion. Its function is as follows. Catalyzes the oxidation of 5,10-methylenetetrahydrofolate to 5,10-methenyltetrahydrofolate and then the hydrolysis of 5,10-methenyltetrahydrofolate to 10-formyltetrahydrofolate. This Legionella pneumophila (strain Paris) protein is Bifunctional protein FolD.